Reading from the N-terminus, the 369-residue chain is Chaperone protein DnaJ (369 aa).

A J domain is found at 5–70 (DYYEVLGVGR…NKRAAYDQFG (66 aa)). The segment at 128–206 (GAETQIRIPR…CHGAGWVKRQ (79 aa)) adopts a CR-type zinc-finger fold. Zn(2+)-binding residues include Cys141, Cys144, Cys158, Cys161, Cys180, Cys183, Cys194, and Cys197. 4 CXXCXGXG motif repeats span residues 141–148 (CDTCHGSG), 158–165 (CPTCNGHG), 180–187 (CSHCQGSG), and 194–201 (CGDCHGAG).

The protein belongs to the DnaJ family. In terms of assembly, homodimer. Zn(2+) is required as a cofactor.

The protein localises to the cytoplasm. In terms of biological role, participates actively in the response to hyperosmotic and heat shock by preventing the aggregation of stress-denatured proteins and by disaggregating proteins, also in an autonomous, DnaK-independent fashion. Unfolded proteins bind initially to DnaJ; upon interaction with the DnaJ-bound protein, DnaK hydrolyzes its bound ATP, resulting in the formation of a stable complex. GrpE releases ADP from DnaK; ATP binding to DnaK triggers the release of the substrate protein, thus completing the reaction cycle. Several rounds of ATP-dependent interactions between DnaJ, DnaK and GrpE are required for fully efficient folding. Also involved, together with DnaK and GrpE, in the DNA replication of plasmids through activation of initiation proteins. The polypeptide is Chaperone protein DnaJ (Nitrosomonas europaea (strain ATCC 19718 / CIP 103999 / KCTC 2705 / NBRC 14298)).